Reading from the N-terminus, the 571-residue chain is DM7 family protein CG15332 (571 aa).

The disordered stretch occupies residues threonine 440–valine 472. Residues leucine 457–aspartate 471 show a composition bias toward acidic residues.

Belongs to the DM7 family.

The protein is DM7 family protein CG15332 of Drosophila melanogaster (Fruit fly).